We begin with the raw amino-acid sequence, 250 residues long: Cyclopentanol dehydrogenase (250 aa).

NAD(+) contacts are provided by M18, D37, D63, V64, N90, Y155, K159, I188, T190, and T193. Y155 serves as the catalytic Proton acceptor.

This sequence belongs to the short-chain dehydrogenases/reductases (SDR) family.

The catalysed reaction is cyclopentanol + NAD(+) = cyclopentanone + NADH + H(+). It carries out the reaction cyclohexanol + NAD(+) = cyclohexanone + NADH + H(+). Its pathway is alcohol metabolism; cyclopentanol degradation; 5-valerolactone from cyclopentanol: step 1/2. Its function is as follows. Catalyzes the oxidation of cyclopentanol to cyclopentanone and cyclohexanol to cyclohexanone. The activity toward cyclohexanol is 60% that of cyclopentanol. This chain is Cyclopentanol dehydrogenase, found in Comamonas sp. (strain NCIMB 9872).